A 338-amino-acid chain; its full sequence is Ketol-acid reductoisomerase (NADP(+)) (338 aa).

A KARI N-terminal Rossmann domain is found at 1–181; the sequence is MQIFYDKDCD…GGGRTGIIET (181 aa). Residues 24–27, arginine 47, serine 50, serine 52, and 82–85 each bind NADP(+); these read YGSQ and DEFQ. Histidine 107 is a catalytic residue. Position 133 (glycine 133) interacts with NADP(+). The KARI C-terminal knotted domain occupies 182 to 327; it reads SFREETETDL…SKLRAMMPWI (146 aa). Aspartate 190, glutamate 194, glutamate 226, and glutamate 230 together coordinate Mg(2+). Residue serine 251 participates in substrate binding.

This sequence belongs to the ketol-acid reductoisomerase family. Mg(2+) is required as a cofactor.

It carries out the reaction (2R)-2,3-dihydroxy-3-methylbutanoate + NADP(+) = (2S)-2-acetolactate + NADPH + H(+). It catalyses the reaction (2R,3R)-2,3-dihydroxy-3-methylpentanoate + NADP(+) = (S)-2-ethyl-2-hydroxy-3-oxobutanoate + NADPH + H(+). The protein operates within amino-acid biosynthesis; L-isoleucine biosynthesis; L-isoleucine from 2-oxobutanoate: step 2/4. It functions in the pathway amino-acid biosynthesis; L-valine biosynthesis; L-valine from pyruvate: step 2/4. Functionally, involved in the biosynthesis of branched-chain amino acids (BCAA). Catalyzes an alkyl-migration followed by a ketol-acid reduction of (S)-2-acetolactate (S2AL) to yield (R)-2,3-dihydroxy-isovalerate. In the isomerase reaction, S2AL is rearranged via a Mg-dependent methyl migration to produce 3-hydroxy-3-methyl-2-ketobutyrate (HMKB). In the reductase reaction, this 2-ketoacid undergoes a metal-dependent reduction by NADPH to yield (R)-2,3-dihydroxy-isovalerate. This chain is Ketol-acid reductoisomerase (NADP(+)), found in Acinetobacter baylyi (strain ATCC 33305 / BD413 / ADP1).